A 383-amino-acid polypeptide reads, in one-letter code: uncharacterized protein (383 aa).

This sequence belongs to the peptidase M20 family.

This is an uncharacterized protein from Staphylococcus aureus (strain N315).